The sequence spans 308 residues: D-alanine--D-alanine ligase (308 aa).

An ATP-grasp domain is found at K104–D301. Residue I130 to T185 coordinates ATP. 3 residues coordinate Mg(2+): D255, E268, and N270.

It belongs to the D-alanine--D-alanine ligase family. It depends on Mg(2+) as a cofactor. Mn(2+) is required as a cofactor.

The protein localises to the cytoplasm. The catalysed reaction is 2 D-alanine + ATP = D-alanyl-D-alanine + ADP + phosphate + H(+). Its pathway is cell wall biogenesis; peptidoglycan biosynthesis. Cell wall formation. The sequence is that of D-alanine--D-alanine ligase from Acinetobacter baumannii (strain AB307-0294).